The following is a 336-amino-acid chain: Holliday junction branch migration complex subunit RuvB (336 aa).

Positions 1–11 (MDDDKLLSGDK) are enriched in basic and acidic residues. The interval 1–21 (MDDDKLLSGDKADDEEASLEK) is disordered. A large ATPase domain (RuvB-L) region spans residues 1 to 184 (MDDDKLLSGD…FGIVEHMAYY (184 aa)). Residues leucine 23, arginine 24, glycine 65, lysine 68, threonine 69, threonine 70, 131-133 (EDF), arginine 174, tyrosine 184, and arginine 221 each bind ATP. Threonine 69 lines the Mg(2+) pocket. A small ATPAse domain (RuvB-S) region spans residues 185–255 (EVADLEDIVK…IVARSLTYLR (71 aa)). The segment at 258–336 (DAGLDETDNK…HLGFPYPENK (79 aa)) is head domain (RuvB-H). Arginine 313 and arginine 318 together coordinate DNA.

It belongs to the RuvB family. Homohexamer. Forms an RuvA(8)-RuvB(12)-Holliday junction (HJ) complex. HJ DNA is sandwiched between 2 RuvA tetramers; dsDNA enters through RuvA and exits via RuvB. An RuvB hexamer assembles on each DNA strand where it exits the tetramer. Each RuvB hexamer is contacted by two RuvA subunits (via domain III) on 2 adjacent RuvB subunits; this complex drives branch migration. In the full resolvosome a probable DNA-RuvA(4)-RuvB(12)-RuvC(2) complex forms which resolves the HJ.

The protein localises to the cytoplasm. It carries out the reaction ATP + H2O = ADP + phosphate + H(+). The RuvA-RuvB-RuvC complex processes Holliday junction (HJ) DNA during genetic recombination and DNA repair, while the RuvA-RuvB complex plays an important role in the rescue of blocked DNA replication forks via replication fork reversal (RFR). RuvA specifically binds to HJ cruciform DNA, conferring on it an open structure. The RuvB hexamer acts as an ATP-dependent pump, pulling dsDNA into and through the RuvAB complex. RuvB forms 2 homohexamers on either side of HJ DNA bound by 1 or 2 RuvA tetramers; 4 subunits per hexamer contact DNA at a time. Coordinated motions by a converter formed by DNA-disengaged RuvB subunits stimulates ATP hydrolysis and nucleotide exchange. Immobilization of the converter enables RuvB to convert the ATP-contained energy into a lever motion, pulling 2 nucleotides of DNA out of the RuvA tetramer per ATP hydrolyzed, thus driving DNA branch migration. The RuvB motors rotate together with the DNA substrate, which together with the progressing nucleotide cycle form the mechanistic basis for DNA recombination by continuous HJ branch migration. Branch migration allows RuvC to scan DNA until it finds its consensus sequence, where it cleaves and resolves cruciform DNA. The polypeptide is Holliday junction branch migration complex subunit RuvB (Lactiplantibacillus plantarum (strain ATCC BAA-793 / NCIMB 8826 / WCFS1) (Lactobacillus plantarum)).